The following is a 244-amino-acid chain: RNA transcription, translation and transport factor protein (244 aa).

N6-acetyllysine is present on residues lysine 20, lysine 62, and lysine 98.

Belongs to the RTRAF family. As to quaternary structure, homodimer. Interacts with FAM98A (via N- and C-terminus). Interacts with NIN; which may prevent phosphorylation of NIN. Interacts with POLR2A. Component of a tRNA-splicing ligase complex with FAM98B, DDX1 and RTCB. (Microbial infection) Interacts with influenza A virus (IAV) RNA polymerase subunits PA, PB1 and PB2, and nucleocapsid NP. Associates with IAV polymerase complexes both in the nucleus and cytosol. Associates with IAV ribonucleoproteins (vRNP) packaged in virions. Interacts with hepatitis C virus core protein p19. As to expression, widely expressed. Expressed at high level in heart and skeletal muscle. Expressed at intermediate level in liver, pancreas, fetal brain and fetal lung. Weakly expressed in adult brain, adult lung, placenta, fetal liver and fetal kidney. Overexpressed in many brain tumors.

It localises to the nucleus. The protein localises to the cytoplasm. Its subcellular location is the cytosol. The protein resides in the perinuclear region. It is found in the cytoskeleton. It localises to the microtubule organizing center. The protein localises to the centrosome. RNA-binding protein involved in modulation of mRNA transcription by Polymerase II. Component of the tRNA-splicing ligase complex and is required for tRNA ligation. May be required for RNA transport. Functionally, (Microbial infection) In case of infection by influenza virus A (IVA), is involved in viral replication. In Homo sapiens (Human), this protein is RNA transcription, translation and transport factor protein.